The sequence spans 498 residues: Protein MGF 505-5R (498 aa).

It belongs to the asfivirus MGF 505 family.

Its function is as follows. Plays a role in virus cell tropism, and may be required for efficient virus replication in macrophages. This Ornithodoros (relapsing fever ticks) protein is Protein MGF 505-5R.